A 383-amino-acid chain; its full sequence is F-box/kelch-repeat protein At2g29830 (383 aa).

The disordered stretch occupies residues 1 to 21 (MVVLSEIPGDPNEDNQNENPQ). Residues 11-21 (PNEDNQNENPQ) show a composition bias toward acidic residues. An F-box domain is found at 27–73 (LPILLQLPEELIASIVALIPRCHYPSLSLVSRAFRHLITSQELYVAR). Kelch repeat units lie at residues 130 to 178 (KMYV…IIDG), 179 to 224 (RIYV…FITY), 226 to 272 (VMQG…VVGD), 274 to 317 (LYAL…YTST), and 324 to 370 (KLVI…RDLP).

In Arabidopsis thaliana (Mouse-ear cress), this protein is F-box/kelch-repeat protein At2g29830.